Here is a 371-residue protein sequence, read N- to C-terminus: Bifunctional chorismate mutase/prephenate dehydratase (371 aa).

Residues 1–92 (MTLKNALLAF…DSVLTQKKWI (92 aa)) enclose the Chorismate mutase domain. Residues R11, R28, K39, D48, E52, S84, and Q88 each contribute to the substrate site. In terms of domain architecture, Prephenate dehydratase spans 104 to 284 (KISFLGSFGS…NITQFIILAQ (181 aa)). The interval 285–371 (KKTYITNKKT…IKCIKILGCF (87 aa)) is regulatory.

The protein resides in the cytoplasm. It catalyses the reaction chorismate = prephenate. The catalysed reaction is prephenate + H(+) = 3-phenylpyruvate + CO2 + H2O. It participates in amino-acid biosynthesis; L-phenylalanine biosynthesis; phenylpyruvate from prephenate: step 1/1. Its pathway is metabolic intermediate biosynthesis; prephenate biosynthesis; prephenate from chorismate: step 1/1. In terms of biological role, catalyzes the Claisen rearrangement of chorismate to prephenate and the decarboxylation/dehydration of prephenate to phenylpyruvate. The protein is Bifunctional chorismate mutase/prephenate dehydratase (pheA) of Buchnera aphidicola subsp. Baizongia pistaciae (strain Bp).